The sequence spans 113 residues: Putative membrane protein insertion efficiency factor (113 aa).

This sequence belongs to the UPF0161 family.

Its subcellular location is the cell inner membrane. Could be involved in insertion of integral membrane proteins into the membrane. This chain is Putative membrane protein insertion efficiency factor, found in Campylobacter jejuni subsp. jejuni serotype O:23/36 (strain 81-176).